A 177-amino-acid polypeptide reads, in one-letter code: Protein SOB FIVE-LIKE 6 (177 aa).

Residues 14–19 (SGWTMY) carry the SOFL-A motif. Disordered regions lie at residues 37–60 (ETKQ…PYYC) and 78–104 (KSKS…FNSS). Positions 47 to 56 (SMVSDASSGP) match the SOFL-B motif. Positions 79–90 (SKSKNKNKNKKK) are enriched in basic residues.

The protein belongs to the SOFL plant protein family. In terms of tissue distribution, expressed in seedlings, flowers and siliques. Barely detectable in roots and leaves.

It localises to the cytoplasm. It is found in the nucleus. Its function is as follows. Involved in cytokinin-mediated development. The polypeptide is Protein SOB FIVE-LIKE 6 (Arabidopsis thaliana (Mouse-ear cress)).